The primary structure comprises 265 residues: Upstream stimulatory factor (265 aa).

Positions methionine 1–aspartate 18 are enriched in basic and acidic residues. Disordered regions lie at residues methionine 1–glutamate 21 and alanine 119–glycine 149. The span at glycine 134–serine 144 shows a compositional bias: polar residues. A bHLH domain is found at arginine 190 to leucine 245.

Efficient DNA binding requires dimerization with another bHLH protein. Binds DNA as a homodimer or a heterodimer. As to expression, enriched in ectodermal tissue.

The protein localises to the nucleus. May act as a transcription factor which recognizes the CACGTG motif on SPEC gene promoters. This chain is Upstream stimulatory factor, found in Strongylocentrotus purpuratus (Purple sea urchin).